The following is a 409-amino-acid chain: Ubiquitin-associated domain-containing protein 1 (409 aa).

N-acetylmethionine is present on methionine 1. A Ubiquitin-like domain is found at leucine 14–serine 98. The region spanning aspartate 187–histidine 231 is the UBA 1 domain. The tract at residues proline 235–glutamate 273 is disordered. Over residues alanine 245–alanine 264 the composition is skewed to low complexity. One can recognise a UBA 2 domain in the interval arginine 292–aspartate 332. An STI1 domain is found at asparagine 357–methionine 396.

As to quaternary structure, component of the KPC complex composed of RNF123/KPC1 and UBAC1/KPC2. Interacts (via ubiquitin-like domain) with RNF123. Interacts (via ubiquitin-like and UBA domains) with the proteasome via its N-terminal domain.

The protein localises to the cytoplasm. Its pathway is protein modification; protein ubiquitination. In terms of biological role, non-catalytic component of the KPC complex, a E3 ubiquitin-protein ligase complex that mediates polyubiquitination of target proteins, such as CDKN1B and NFKB1. The KPC complex catalyzes polyubiquitination and proteasome-mediated degradation of CDKN1B during G1 phase of the cell cycle. The KPC complex also acts as a key regulator of the NF-kappa-B signaling by promoting maturation of the NFKB1 component of NF-kappa-B by catalyzing ubiquitination of the NFKB1 p105 precursor. Within the KPC complex, UBAC1 acts as an adapter that promotes the transfer of target proteins that have been polyubiquitinated by RNF123/KPC1 to the 26S proteasome. The chain is Ubiquitin-associated domain-containing protein 1 (Ubac1) from Rattus norvegicus (Rat).